The chain runs to 440 residues: Actin-like protein 7A (440 aa).

The tract at residues 1–27 (MSLDAVWAPQTANIGDGPAKKASDQTS) is disordered. The tract at residues 36–56 (ASLRDGPAKRAVWVRRDNAEK) is required for interaction with TES.

It belongs to the actin family. As to quaternary structure, interacts (via N-terminus) with TES (via LIM domain 2). Heterodimer with TES; the heterodimer interacts with ENAH to form a heterotrimer. Interacts with ACTL9. Interacts with CYLC1; the interaction may be relevant for proper acrosome attachment to the nuclear envelope. In terms of tissue distribution, detected in testis. Detected at the acrosome of round spermatids (at protein level).

The protein resides in the cytoplasm. The protein localises to the cytoskeleton. Its subcellular location is the golgi apparatus. It is found in the nucleus. Functionally, essential for normal spermatogenesis and male fertility. Required for normal sperm head morphology, acroplaxome formation, acrosome attachment, and acrosome granule stability. May anchor and stabilize acrosomal adherence to the acroplaxome at least in part by facilitating the presence of F-actin in the subacrosomal space. May play an important role in formation and fusion of Golgi-derived vesicles during acrosome biogenesis. This is Actin-like protein 7A (Actl7a) from Rattus norvegicus (Rat).